A 75-amino-acid chain; its full sequence is Small ribosomal subunit protein bS18 (75 aa).

Belongs to the bacterial ribosomal protein bS18 family. In terms of assembly, part of the 30S ribosomal subunit. Forms a tight heterodimer with protein bS6.

Its function is as follows. Binds as a heterodimer with protein bS6 to the central domain of the 16S rRNA, where it helps stabilize the platform of the 30S subunit. The polypeptide is Small ribosomal subunit protein bS18 (Shewanella baltica (strain OS223)).